The primary structure comprises 464 residues: GDNF family receptor alpha-2 (464 aa).

Positions 1-21 (MILANVFCLFFFLDETLRSLA) are cleaved as a signal peptide. 11 cysteine pairs are disulfide-bonded: cysteine 40-cysteine 93, cysteine 95-cysteine 105, cysteine 161-cysteine 222, cysteine 168-cysteine 174, cysteine 185-cysteine 200, cysteine 195-cysteine 241, cysteine 224-cysteine 229, cysteine 251-cysteine 323, cysteine 258-cysteine 264, cysteine 275-cysteine 293, and cysteine 285-cysteine 347. Asparagine 52 carries N-linked (GlcNAc...) asparagine glycosylation. Asparagine 357 carries an N-linked (GlcNAc...) asparagine glycan. The interval 363–392 (VSPKGPSFQATQAPRVEKTPSLPDDLSDST) is disordered. A compositionally biased stretch (low complexity) spans 381–392 (TPSLPDDLSDST). A glycan (N-linked (GlcNAc...) asparagine) is linked at asparagine 413. Serine 444 is lipidated: GPI-anchor amidated serine. The propeptide at 445-464 (RARPSAALTVLSVLMLKLAL) is removed in mature form.

It belongs to the GDNFR family. Interacts with NRTN ligand and RET: forms a 2:2:2 ternary complex composed of NRTN ligand, GFRA2 and RET receptor. Also forms a 4:4:4 tetrameric complex composed of 4 copies of NRTN ligand, GFRA2 and RET receptor, which prevents endocytosis of RET. Interacts with SORL1. In terms of tissue distribution, found in both brain and placenta.

It is found in the cell membrane. In terms of biological role, receptor for neurturin (NRTN), a growth factor that supports the survival of sympathetic neurons. NRTN-binding leads to autophosphorylation and activation of the RET receptor. Also able to mediate GDNF signaling through the RET tyrosine kinase receptor. Functionally, participates in NRTN-induced 'Ser-727' phosphorylation of STAT3. The chain is GDNF family receptor alpha-2 (GFRA2) from Homo sapiens (Human).